A 245-amino-acid polypeptide reads, in one-letter code: Sec-independent protein translocase protein TatC (245 aa).

The next 6 membrane-spanning stretches (helical) occupy residues 17–37 (FISV…RSYI), 73–93 (FFAA…KFVA), 107–127 (FVSF…FVVV), 159–179 (VVVA…FAKI), 191–207 (FRIA…FMTP), and 210–230 (VLSQ…SILI).

The protein belongs to the TatC family. In terms of assembly, the Tat system comprises two distinct complexes: a TatABC complex, containing multiple copies of TatA, TatB and TatC subunits, and a separate TatA complex, containing only TatA subunits. Substrates initially bind to the TatABC complex, which probably triggers association of the separate TatA complex to form the active translocon.

Its subcellular location is the cell inner membrane. Its function is as follows. Part of the twin-arginine translocation (Tat) system that transports large folded proteins containing a characteristic twin-arginine motif in their signal peptide across membranes. Together with TatB, TatC is part of a receptor directly interacting with Tat signal peptides. This is Sec-independent protein translocase protein TatC from Campylobacter jejuni subsp. jejuni serotype O:2 (strain ATCC 700819 / NCTC 11168).